The chain runs to 111 residues: Nucleoid-associated protein Teth39_2199 (111 aa).

It belongs to the YbaB/EbfC family. Homodimer.

Its subcellular location is the cytoplasm. It localises to the nucleoid. Its function is as follows. Binds to DNA and alters its conformation. May be involved in regulation of gene expression, nucleoid organization and DNA protection. The chain is Nucleoid-associated protein Teth39_2199 from Thermoanaerobacter pseudethanolicus (strain ATCC 33223 / 39E) (Clostridium thermohydrosulfuricum).